A 1152-amino-acid polypeptide reads, in one-letter code: P3N-PIPO polyprotein (1152 aa).

Residues 292 to 437 form the Peptidase S30 domain; the sequence is VMNQQTLTAL…HTLTHRMVQY (146 aa). Residues His-345, Asp-354, and Ser-388 each act as for P1 proteinase activity in the active site. Residues 489-492 carry the Involved in interaction with stylet and aphid transmission motif; it reads KITC. The Involved in virions binding and aphid transmission motif lies at 747 to 749; the sequence is PTK. A Peptidase C6 domain is found at 773–895; sequence MFVAKDGYCY…ESEMQHYRVG (123 aa). Active-site for helper component proteinase activity residues include Cys-781 and His-854.

It belongs to the potyviridae P3N-PIPO polyprotein family. Interacts (via PIPO domain) with host PCaP1 protein; this interaction may help to anchor the movement complex to the plasma membrane from which the complex could move to the plasmodesmata. In terms of processing, potyviral RNA is expressed as two polyproteins which undergo post-translational proteolytic processing. Genome polyprotein is processed by NIa-pro, P1 and HC-pro proteinases resulting in the production of at least ten individual proteins. P3N-PIPO is cleaved by P1 and HC-pro proteinases resulting in the production of three individual proteins. The P1 proteinase and the HC-pro cleave only their respective C-termini autocatalytically.

The protein localises to the host cell junction. It is found in the host plasmodesma. The enzyme catalyses Hydrolyzes a Gly-|-Gly bond at its own C-terminus, commonly in the sequence -Tyr-Xaa-Val-Gly-|-Gly, in the processing of the potyviral polyprotein.. Required for aphid transmission and also has proteolytic activity. Only cleaves a Gly-Gly dipeptide at its own C-terminus. Interacts with virions and aphid stylets. Acts as a suppressor of RNA-mediated gene silencing, also known as post-transcriptional gene silencing (PTGS), a mechanism of plant viral defense that limits the accumulation of viral RNAs. May have RNA-binding activity. Its function is as follows. Allows efficient cell to cell propagation, by bypassing the host cell wall barrier. Transports viral genome to neighboring plant cells directly through plasmosdesmata, without any budding. This chain is P3N-PIPO polyprotein, found in Carthamus tinctorius (Safflower).